The sequence spans 397 residues: Probable sugar efflux transporter (397 aa).

Helical transmembrane passes span 15 to 35, 51 to 71, 80 to 100, 103 to 123, 137 to 157, 169 to 189, 209 to 229, 246 to 266, 277 to 297, 299 to 319, 333 to 353, and 365 to 385; these read VIVM…PVAL, GLMI…CMLM, LLIS…FAWN, VLLI…SITA, QALG…LPLG, TFTL…RLLP, PMLI…FTAY, KATA…VLFS, LLSS…VSGI, GAIF…SLAM, VATA…ALIG, and IGYV…LMFL.

Belongs to the major facilitator superfamily. SotB (TC 2.A.1.2) family.

It is found in the cell inner membrane. In terms of biological role, involved in the efflux of sugars. The physiological role may be the reduction of the intracellular concentration of toxic sugars or sugar metabolites. This is Probable sugar efflux transporter from Mannheimia succiniciproducens (strain KCTC 0769BP / MBEL55E).